The primary structure comprises 181 residues: Large ribosomal subunit protein uL5 (181 aa).

It belongs to the universal ribosomal protein uL5 family. In terms of assembly, part of the 50S ribosomal subunit; part of the 5S rRNA/L5/L18/L25 subcomplex. Contacts the 5S rRNA and the P site tRNA. Forms a bridge to the 30S subunit in the 70S ribosome.

This is one of the proteins that bind and probably mediate the attachment of the 5S RNA into the large ribosomal subunit, where it forms part of the central protuberance. In the 70S ribosome it contacts protein S13 of the 30S subunit (bridge B1b), connecting the 2 subunits; this bridge is implicated in subunit movement. Contacts the P site tRNA; the 5S rRNA and some of its associated proteins might help stabilize positioning of ribosome-bound tRNAs. The sequence is that of Large ribosomal subunit protein uL5 from Onion yellows phytoplasma (strain OY-M).